A 784-amino-acid polypeptide reads, in one-letter code: MPHTLWMVWVLGVIISLSKEESSNQASLSCDRNGICKGSSGSLNSIPSGLTEAVKSLDLSNNRITYISNSDLQRCVNLQALVLTSNGINTIEEDSFSSLGSLEHLDLSYNYLSNLSSSWFKPLSSLTFLNLLGNPYKTLGETSLFSHLTKLQILRVGNMDTFTKIQRKDFAGLTFLEELEIDASDLQSYEPKSLKSIQNVSHLILHMKQHILLLEIFVDVTSSVECLELRDTDLDTFHFSELSTGETNSLIKKFTFRNVKITDESLFQVMKLLNQISGLLELEFDDCTLNGVGNFRASDNDRVIDPGKVETLTIRRLHIPRFYLFYDLSTLYSLTERVKRITVENSKVFLVPCLLSQHLKSLEYLDLSENLMVEEYLKNSACEDAWPSLQTLILRQNHLASLEKTGETLLTLKNLTNVDISKNSFHSMPETCQWPEKMKYLNLSSTRIHSVTGCIPKTLEILDVSNNNLNLFSLNLPQLKELYISRNKLMTLPDASLLPMLLVLKISRNAITTFSKEQLDSFHTLKTLEAGGNNFICSCEFLSFTQEQQALAKVLIDWPANYLCDSPSHVRGQQVQDVRLSVSECHRTALVSGMCCALFLLILLTGVLCHRFHGLWYMKMMWAWLQAKRKPRKAPSRNICYDAFVSYSERDAYWVENLMVQELENFNPPFKLCLHKRDFIPGKWIIDNIIDSIEKSHKTVFVLSENFVKSEWCKYELDFSHFRLFDENNDAAILILLEPIEKKAIPQRFCKLRKIMNTKTYLEWPMDEAQREGFWVNLRAAIKS.

An N-terminal signal peptide occupies residues 1 to 20; the sequence is MPHTLWMVWVLGVIISLSKE. Residues 21–587 lie on the Extracellular side of the membrane; the sequence is ESSNQASLSC…VRLSVSECHR (567 aa). C30 and C36 are joined by a disulfide. LRR repeat units follow at residues 54-77, 78-101, 102-125, 126-150, 151-175, 176-199, 200-223, 224-250, 251-278, 279-308, 309-337, 338-361, 362-388, 389-414, 415-437, 438-457, 458-478, 479-500, and 501-524; these read VKSLDLSNNRITYISNSDLQRCVN, LQALVLTSNGINTIEEDSFSSLGS, LEHLDLSYNYLSNLSSSWFKPLSS, LTFLNLLGNPYKTLGETSLFSHLTK, LQILRVGNMDTFTKIQRKDFAGLTF, LEELEIDASDLQSYEPKSLKSIQN, VSHLILHMKQHILLLEIFVDVTSS, VECLELRDTDLDTFHFSELSTGETNSL, IKKFTFRNVKITDESLFQVMKLLNQISG, LLELEFDDCTLNGVGNFRASDNDRVIDPGK, VETLTIRRLHIPRFYLFYDLSTLYSLTER, VKRITVENSKVFLVPCLLSQHLKS, LEYLDLSENLMVEEYLKNSACEDAWPS, LQTLILRQNHLASLEKTGETLLTLKN, LTNVDISKNSFHSMPETCQWPEK, MKYLNLSSTRIHSVTGCIPK, TLEILDVSNNNLNLFSLNLPQ, LKELYISRNKLMTLPDASLLPM, and LLVLKISRNAITTFSKEQLDSFHT. N114 is a glycosylation site (N-linked (GlcNAc...) asparagine). Residue N199 is glycosylated (N-linked (GlcNAc...) asparagine). C353 and C382 are disulfide-bonded. N414 carries N-linked (GlcNAc...) asparagine glycosylation. A disulfide bond links C432 and C454. The N-linked (GlcNAc...) asparagine glycan is linked to N442. Residues 525 to 579 enclose the LRRCT domain; it reads LKTLEAGGNNFICSCEFLSFTQEQQALAKVLIDWPANYLCDSPSHVRGQQVQDVR. Residues 588–608 traverse the membrane as a helical segment; that stretch reads TALVSGMCCALFLLILLTGVL. Topologically, residues 609-784 are cytoplasmic; that stretch reads CHRFHGLWYM…WVNLRAAIKS (176 aa). The TIR domain maps to 639–782; it reads ICYDAFVSYS…GFWVNLRAAI (144 aa). K754 is covalently cross-linked (Glycyl lysine isopeptide (Lys-Gly) (interchain with G-Cter in ubiquitin)). An ATG16L1-binding motif motif is present at residues 761-778; it reads YLEWPMDEAQREGFWVNL.

It belongs to the Toll-like receptor family. As to quaternary structure, interacts with LY96, TLR1 and TLR6 (via extracellular domain). TLR2 seems to exist in heterodimers with either TLR1 or TLR6 before stimulation by the ligand. The heterodimers form bigger oligomers in response to their corresponding ligands as well as further heterotypic associations with other receptors such as CD14 and/or CD36. Binds MYD88 (via TIR domain). Interacts with TICAM1. Interacts with CNPY3. Interacts with ATG16L1. Interacts with PPP1R11. Interacts with TICAM2. Interacts with TIRAP. Ubiquitinated at Lys-754 by PPP1R11, leading to its degradation. Deubiquitinated by USP2. In terms of processing, glycosylation of Asn-442 is critical for secretion of the N-terminal ectodomain of TLR2.

It localises to the membrane. The protein localises to the cytoplasmic vesicle. Its subcellular location is the phagosome membrane. It is found in the membrane raft. In terms of biological role, cooperates with LY96 to mediate the innate immune response to bacterial lipoproteins and other microbial cell wall components. Cooperates with TLR1 or TLR6 to mediate the innate immune response to bacterial lipoproteins or lipopeptides. Acts via MYD88 and TRAF6, leading to NF-kappa-B activation, cytokine secretion and the inflammatory response. May also promote apoptosis in response to lipoproteins. Forms activation clusters composed of several receptors depending on the ligand, these clusters trigger signaling from the cell surface and subsequently are targeted to the Golgi in a lipid-raft dependent pathway. Forms the cluster TLR2:TLR6:CD14:CD36 in response to diacylated lipopeptides and TLR2:TLR1:CD14 in response to triacylated lipopeptides. The sequence is that of Toll-like receptor 2 (TLR2) from Gorilla gorilla gorilla (Western lowland gorilla).